The following is a 200-amino-acid chain: NADH-quinone oxidoreductase subunit C (200 aa).

The protein belongs to the complex I 30 kDa subunit family. NDH-1 is composed of 14 different subunits. Subunits NuoB, C, D, E, F, and G constitute the peripheral sector of the complex.

The protein localises to the cell inner membrane. It carries out the reaction a quinone + NADH + 5 H(+)(in) = a quinol + NAD(+) + 4 H(+)(out). NDH-1 shuttles electrons from NADH, via FMN and iron-sulfur (Fe-S) centers, to quinones in the respiratory chain. The immediate electron acceptor for the enzyme in this species is believed to be ubiquinone. Couples the redox reaction to proton translocation (for every two electrons transferred, four hydrogen ions are translocated across the cytoplasmic membrane), and thus conserves the redox energy in a proton gradient. This is NADH-quinone oxidoreductase subunit C from Rhizobium leguminosarum bv. trifolii (strain WSM2304).